The primary structure comprises 354 residues: Uroporphyrinogen decarboxylase (354 aa).

Substrate contacts are provided by residues 25–29 (RQAGR), Asp75, Tyr152, Thr207, and His330.

It belongs to the uroporphyrinogen decarboxylase family. In terms of assembly, homodimer.

Its subcellular location is the cytoplasm. It carries out the reaction uroporphyrinogen III + 4 H(+) = coproporphyrinogen III + 4 CO2. It participates in porphyrin-containing compound metabolism; protoporphyrin-IX biosynthesis; coproporphyrinogen-III from 5-aminolevulinate: step 4/4. Its function is as follows. Catalyzes the decarboxylation of four acetate groups of uroporphyrinogen-III to yield coproporphyrinogen-III. The chain is Uroporphyrinogen decarboxylase from Xanthomonas oryzae pv. oryzae (strain PXO99A).